The following is an 898-amino-acid chain: Magnesium-transporting ATPase, P-type 1 (898 aa).

The Cytoplasmic segment spans residues 1 to 94 (MFKEIFTRLI…QPSPWWVHLW (94 aa)). A helical membrane pass occupies residues 95 to 115 (VCYRNPFNILLTILGAISYAT). E116 is a topological domain (extracellular). Residues 117–137 (DLFAAGVIALMVAISTLLNFI) form a helical membrane-spanning segment. The Cytoplasmic segment spans residues 138–287 (QEARSTKAAD…PNAFQQGISR (150 aa)). Residues 288–308 (VSMLLIRFMLVMAPVVLLING) traverse the membrane as a helical segment. Topologically, residues 309-317 (YTKGDWWEA) are extracellular. A helical transmembrane segment spans residues 318–335 (ALFALSVAVGLTPEMLPM). E331 contacts Mg(2+). Topologically, residues 336-695 (IVTSTLARGA…IEGRRTFANM (360 aa)) are cytoplasmic. The 4-aspartylphosphate intermediate role is filled by D373. 3 residues coordinate Mg(2+): D641, D645, and N709. A helical membrane pass occupies residues 696–715 (LKYIKMTASSNFGNVFSVLV). At 716–724 (ASAFLPFLP) the chain is on the extracellular side. Residues 725 to 744 (MLPLHLLIQNLLYDVSQVAI) traverse the membrane as a helical segment. Mg(2+)-binding residues include N734 and D738. Over 745 to 766 (PFDNVDDEQIQKPQRWNPADLG) the chain is Cytoplasmic. A helical membrane pass occupies residues 767–790 (RFMIFFGPISSIFDILTFCLMWWV). Over 791–799 (FHANTPETQ) the chain is Extracellular. A helical membrane pass occupies residues 800-818 (TLFQSGWFVVGLLSQTLIV). Residues 819–831 (HMIRTRRVPFIQS) are Cytoplasmic-facing. A helical transmembrane segment spans residues 832-851 (CASWPLMIMTVIVMIVGIAL). Residues 852–866 (PFSPLASYLQLQALP) lie on the Extracellular side of the membrane. A helical transmembrane segment spans residues 867 to 886 (LSYFPWLVAILAGYMTLTQL). The Cytoplasmic portion of the chain corresponds to 887 to 898 (VKGFYSRRYGWQ).

It belongs to the cation transport ATPase (P-type) (TC 3.A.3) family. Type IIIB subfamily.

Its subcellular location is the cell inner membrane. The enzyme catalyses Mg(2+)(out) + ATP + H2O = Mg(2+)(in) + ADP + phosphate + H(+). In terms of biological role, mediates magnesium influx to the cytosol. The chain is Magnesium-transporting ATPase, P-type 1 (mgtA) from Escherichia coli O157:H7.